Here is a 211-residue protein sequence, read N- to C-terminus: Large ribosomal subunit protein uL4 (211 aa).

Polar residues predominate over residues 46-55 (GNHATKTRSM). The interval 46–89 (GNHATKTRSMVSGGGKKPWSQKGTGRARQGSTRAPHWVGGGTVH) is disordered.

Belongs to the universal ribosomal protein uL4 family. In terms of assembly, part of the 50S ribosomal subunit.

In terms of biological role, one of the primary rRNA binding proteins, this protein initially binds near the 5'-end of the 23S rRNA. It is important during the early stages of 50S assembly. It makes multiple contacts with different domains of the 23S rRNA in the assembled 50S subunit and ribosome. Functionally, forms part of the polypeptide exit tunnel. This Leptospira interrogans serogroup Icterohaemorrhagiae serovar copenhageni (strain Fiocruz L1-130) protein is Large ribosomal subunit protein uL4.